Reading from the N-terminus, the 177-residue chain is ATP-dependent protease subunit HslV (177 aa).

Residue T7 is part of the active site. Na(+) is bound by residues A162, C165, and T168.

The protein belongs to the peptidase T1B family. HslV subfamily. A double ring-shaped homohexamer of HslV is capped on each side by a ring-shaped HslU homohexamer. The assembly of the HslU/HslV complex is dependent on binding of ATP.

The protein resides in the cytoplasm. It carries out the reaction ATP-dependent cleavage of peptide bonds with broad specificity.. Its activity is regulated as follows. Allosterically activated by HslU binding. Functionally, protease subunit of a proteasome-like degradation complex believed to be a general protein degrading machinery. This chain is ATP-dependent protease subunit HslV, found in Leptospira biflexa serovar Patoc (strain Patoc 1 / Ames).